A 202-amino-acid polypeptide reads, in one-letter code: Peptide methionine sulfoxide reductase B1, chloroplastic (202 aa).

A chloroplast-targeting transit peptide spans 1–63 (MASSTRLTII…SSSPKPDNVQ (63 aa)). Residues 48 to 67 (YSMGSSSSSPKPDNVQEAEK) are disordered. Residues 75–197 (ENEWKKRLTP…NSAALKLNAL (123 aa)) form the MsrB domain. Zn(2+)-binding residues include C114, C117, C163, and C166. Residue C186 is the Nucleophile of the active site.

This sequence belongs to the MsrB Met sulfoxide reductase family. Requires Zn(2+) as cofactor. As to expression, expressed at low levels in stems, leaves, floral buds, flowers and siliques (at protein level).

It is found in the plastid. The protein localises to the chloroplast. The enzyme catalyses L-methionyl-[protein] + [thioredoxin]-disulfide + H2O = L-methionyl-(R)-S-oxide-[protein] + [thioredoxin]-dithiol. In terms of biological role, catalyzes the reduction of methionine sulfoxide (MetSO) to methionine in proteins. Specifically reduces the MetSO R-enantiomer. Plays a protective role against oxidative stress by restoring activity to proteins that have been inactivated by methionine oxidation. May play an essential function in association with MSRB2 in maintaining vegetative growth during environmental constraints, through the preservation of photosynthetic antennae. MSRB1 and MSRB2 account for most of the leaf peptide MSR capacity. The polypeptide is Peptide methionine sulfoxide reductase B1, chloroplastic (Arabidopsis thaliana (Mouse-ear cress)).